A 155-amino-acid chain; its full sequence is Transcriptional regulator MraZ (155 aa).

SpoVT-AbrB domains follow at residues 5–52 and 81–124; these read TYEN…SQDR and SMNL…EPAA.

It belongs to the MraZ family. As to quaternary structure, forms oligomers.

It is found in the cytoplasm. It localises to the nucleoid. This Pelagibacter ubique (strain HTCC1062) protein is Transcriptional regulator MraZ.